The chain runs to 203 residues: MSDTVLGLVLVAAGYLAGSIPFGVVLGRFVLGVDVRQVGSGNIGATNVARAGGKKLGIAVLLLDAAKAIVPILVARWLLAGTPRAELFTVLVALAAFVGHLYPVWLGFRGGKGVATGLGIFLVLSPWAALAGAVTYGVAYGATRISSVGSLSGTAVCVLGTFVAHGWTSPVSWAGLALAALIVVRHRENIRRLVRGEEKRMRV.

The next 5 helical transmembrane spans lie at 5–25 (VLGLVLVAAGYLAGSIPFGVV), 55–75 (KLGIAVLLLDAAKAIVPILVA), 88–108 (FTVLVALAAFVGHLYPVWLGF), 114–134 (VATGLGIFLVLSPWAALAGAV), and 162–182 (FVAHGWTSPVSWAGLALAALI).

This sequence belongs to the PlsY family. In terms of assembly, probably interacts with PlsX.

It is found in the cell inner membrane. It catalyses the reaction an acyl phosphate + sn-glycerol 3-phosphate = a 1-acyl-sn-glycero-3-phosphate + phosphate. It participates in lipid metabolism; phospholipid metabolism. Its function is as follows. Catalyzes the transfer of an acyl group from acyl-phosphate (acyl-PO(4)) to glycerol-3-phosphate (G3P) to form lysophosphatidic acid (LPA). This enzyme utilizes acyl-phosphate as fatty acyl donor, but not acyl-CoA or acyl-ACP. The chain is Glycerol-3-phosphate acyltransferase from Anaeromyxobacter sp. (strain Fw109-5).